We begin with the raw amino-acid sequence, 186 residues long: Casparian strip membrane protein 3 (186 aa).

At 1–26 (MTKSTYVELGEEKTSNQKGNMKRGVS) the chain is on the cytoplasmic side. A helical transmembrane segment spans residues 27–47 (ILDFILRLIAIVATLASAIAM). Residues 48-74 (GTTDESLPFFTQFVRFRANYDDLPTLR) are Extracellular-facing. The chain crosses the membrane as a helical span at residues 75-95 (FFVVASAIVSGYLILSLPLSI). The Cytoplasmic segment spans residues 96-107 (LHIIRSSAGMTR). Residues 108 to 128 (VIFIILDTVMLGLLTAGSSAA) traverse the membrane as a helical segment. At 129-161 (ASIVYLAHKGNRKANWFAFCQQYNSFCERISGS) the chain is on the extracellular side. The helical transmembrane segment at 162-182 (LIGSFIAIPLFIMLILLSALV) threads the bilayer. The Cytoplasmic portion of the chain corresponds to 183–186 (LSRR).

This sequence belongs to the Casparian strip membrane proteins (CASP) family. In terms of assembly, homodimer and heterodimers.

It localises to the cell membrane. Regulates membrane-cell wall junctions and localized cell wall deposition. Required for establishment of the Casparian strip membrane domain (CSD) and the subsequent formation of Casparian strips, a cell wall modification of the root endodermis that determines an apoplastic barrier between the intraorganismal apoplasm and the extraorganismal apoplasm and prevents lateral diffusion. The sequence is that of Casparian strip membrane protein 3 from Medicago truncatula (Barrel medic).